A 395-amino-acid chain; its full sequence is Elongation factor Tu (395 aa).

Residues 10 to 204 form the tr-type G domain; the sequence is KEHANIGTIG…AVDDYIPTPE (195 aa). The segment at 19-26 is G1; the sequence is GHVDHGKT. 19–26 is a GTP binding site; the sequence is GHVDHGKT. Thr26 is a Mg(2+) binding site. A G2 region spans residues 60–64; sequence GITIN. A G3 region spans residues 81–84; sequence DCPG. Residues 81 to 85 and 136 to 139 contribute to the GTP site; these read DCPGH and NKAD. The tract at residues 136–139 is G4; the sequence is NKAD. The tract at residues 174 to 176 is G5; it reads SAL.

Belongs to the TRAFAC class translation factor GTPase superfamily. Classic translation factor GTPase family. EF-Tu/EF-1A subfamily. In terms of assembly, monomer.

The protein resides in the cytoplasm. It catalyses the reaction GTP + H2O = GDP + phosphate + H(+). Functionally, GTP hydrolase that promotes the GTP-dependent binding of aminoacyl-tRNA to the A-site of ribosomes during protein biosynthesis. The polypeptide is Elongation factor Tu (Staphylococcus carnosus (strain TM300)).